Reading from the N-terminus, the 638-residue chain is MRGGCISQGKAAAGLLFCVMVFASAERPVFTNHFLVELHRGGEEKARQVAAEHGFGVRKLPFAEGLYHFYHNGLAKARRRRSLQHQQQLERDPRVKRALQQEGFNRKKRGYRDINEIDINVNDPLFTKQWYLINTGQADGTPGLDLNVAEAWELGYTGKGVTIGIMDDGIDYLHPDLASNYNAEASYDFSSNDPYPYPRYTDDWSNSHGTRCAGEVSAAANNNICGVGVAYGSKVAGIRMLDQPFMTDIIEASSISHMPQLIDIYSASWGPTDNGKTVDGPRELTLQAMADGVNKGRGGKGSIYVWASGDGGSYDDCNCDGYASSMWTISINSAINDGRTALYDESCSSTLASTFSNGRKRNPEAGVATTDLYGNCTLRHSGTSAAAPEAAGVFALALEANLGLTWRDMQHLTVLTSKRNQLHDEVHQWRRNGVGLEFNHLFGYGVLDAGAMVKMAKDWKTVPERFHCVGGSVQNPEKIPTTGKPVLTLTTDACEGKENFVRYLEHVQAVVTVNATRRGDLNINMTSPMGTKSILLSRRPRGDDAKVGFDKWPFMTTHTWGEDARGTWILELGFVGSAPQKGVLMEWTLMLHGTQSAPYIDQVVRDYQSKLAMSKKEELEEELDEAVQRSLKSILGKD.

An N-terminal signal peptide occupies residues 1 to 25 (MRGGCISQGKAAAGLLFCVMVFASA). Residues 26-109 (ERPVFTNHFL…QQEGFNRKKR (84 aa)) constitute a propeptide that is removed on maturation. Residues 129–453 (QWYLINTGQA…YGVLDAGAMV (325 aa)) enclose the Peptidase S8 domain. Catalysis depends on charge relay system residues Asp167 and His208. Intrachain disulfides connect Cys225/Cys376 and Cys317/Cys347. N-linked (GlcNAc...) asparagine glycosylation occurs at Asn375. Catalysis depends on Ser384, which acts as the Charge relay system. Positions 461-597 (TVPERFHCVG…TLMLHGTQSA (137 aa)) constitute a P/Homo B domain. Residues Cys468 and Cys494 are joined by a disulfide bond. Asn514 and Asn524 each carry an N-linked (GlcNAc...) asparagine glycan.

It belongs to the peptidase S8 family. Furin subfamily.

It is found in the cytoplasmic vesicle. Its subcellular location is the secretory vesicle. It localises to the secreted. It catalyses the reaction Release of protein hormones and neuropeptides from their precursors, generally by hydrolysis of -Lys-Arg-|- bonds.. Functionally, serine endopeptidase which is involved in the processing of hormone and other protein precursors at sites comprised of pairs of basic amino acid residues. Responsible for the release of glucagon from proglucagon in pancreatic A cells. This is Neuroendocrine convertase 2 (PCSK2) from Bos taurus (Bovine).